Reading from the N-terminus, the 154-residue chain is Myoglobin (154 aa).

One can recognise a Globin domain in the interval 2-148 (GLSDGEWQLV…FRNDMAAKYK (147 aa)). Phosphoserine is present on Ser4. His65 serves as a coordination point for nitrite. Residue His65 coordinates O2. Thr68 bears the Phosphothreonine mark. His94 serves as a coordination point for heme b.

Belongs to the globin family. In terms of assembly, monomeric.

The protein resides in the cytoplasm. The protein localises to the sarcoplasm. It carries out the reaction Fe(III)-heme b-[protein] + nitric oxide + H2O = Fe(II)-heme b-[protein] + nitrite + 2 H(+). The catalysed reaction is H2O2 + AH2 = A + 2 H2O. Functionally, monomeric heme protein which primary function is to store oxygen and facilitate its diffusion within muscle tissues. Reversibly binds oxygen through a pentacoordinated heme iron and enables its timely and efficient release as needed during periods of heightened demand. Depending on the oxidative conditions of tissues and cells, and in addition to its ability to bind oxygen, it also has a nitrite reductase activity whereby it regulates the production of bioactive nitric oxide. Under stress conditions, like hypoxia and anoxia, it also protects cells against reactive oxygen species thanks to its pseudoperoxidase activity. This is Myoglobin (MB) from Sus scrofa (Pig).